The sequence spans 296 residues: Enoyl-CoA hydratase domain-containing protein 2, mitochondrial (296 aa).

Position 101 is an N6-acetyllysine; alternate (K101). The residue at position 101 (K101) is an N6-succinyllysine; alternate.

It belongs to the enoyl-CoA hydratase/isomerase family.

The protein localises to the mitochondrion. The polypeptide is Enoyl-CoA hydratase domain-containing protein 2, mitochondrial (ECHDC2) (Bos taurus (Bovine)).